A 427-amino-acid polypeptide reads, in one-letter code: Adenylosuccinate synthetase (427 aa).

Residues 12–18 (GDEGKGK) and 40–42 (GHT) each bind GTP. The Proton acceptor role is filled by Asp13. 2 residues coordinate Mg(2+): Asp13 and Gly40. Residues 13–16 (DEGK), 38–41 (NAGH), Thr128, Arg142, Gln223, Thr238, and Arg302 each bind IMP. His41 serves as the catalytic Proton donor. 298–304 (TVTGRAR) contacts substrate. Residues Arg304, 330 to 332 (RLD), and 412 to 414 (SVG) each bind GTP.

The protein belongs to the adenylosuccinate synthetase family. As to quaternary structure, homodimer. The cofactor is Mg(2+).

The protein localises to the cytoplasm. It carries out the reaction IMP + L-aspartate + GTP = N(6)-(1,2-dicarboxyethyl)-AMP + GDP + phosphate + 2 H(+). It participates in purine metabolism; AMP biosynthesis via de novo pathway; AMP from IMP: step 1/2. In terms of biological role, plays an important role in the de novo pathway of purine nucleotide biosynthesis. Catalyzes the first committed step in the biosynthesis of AMP from IMP. This chain is Adenylosuccinate synthetase, found in Brachyspira hyodysenteriae (strain ATCC 49526 / WA1).